A 191-amino-acid polypeptide reads, in one-letter code: Inosine triphosphate pyrophosphatase (191 aa).

Position 12–17 (12–17) interacts with ITP; it reads TGNANK. Glutamate 42 lines the Mg(2+) pocket. ITP-binding positions include lysine 54, 70–71, lysine 87, 145–148, lysine 168, and 173–174; these read DT, FGWD, and HR.

Belongs to the HAM1 NTPase family. In terms of assembly, homodimer. The cofactor is Mg(2+). Mn(2+) is required as a cofactor.

Its subcellular location is the cytoplasm. The enzyme catalyses ITP + H2O = IMP + diphosphate + H(+). The catalysed reaction is dITP + H2O = dIMP + diphosphate + H(+). It catalyses the reaction XTP + H2O = XMP + diphosphate + H(+). Its function is as follows. Pyrophosphatase that hydrolyzes non-canonical purine nucleotides such as inosine triphosphate (ITP), deoxyinosine triphosphate (dITP) or xanthosine 5'-triphosphate (XTP) to their respective monophosphate derivatives. The enzyme does not distinguish between the deoxy- and ribose forms. Probably excludes non-canonical purines from RNA and DNA precursor pools, thus preventing their incorporation into RNA and DNA and avoiding chromosomal lesions. In Phytophthora infestans (strain T30-4) (Potato late blight agent), this protein is Inosine triphosphate pyrophosphatase.